Reading from the N-terminus, the 162-residue chain is Deoxyuridine 5'-triphosphate nucleotidohydrolase (162 aa).

This sequence belongs to the dUTPase family. As to quaternary structure, homotrimer. It depends on Mg(2+) as a cofactor.

It is found in the host cytoplasm. The protein resides in the virion. The enzyme catalyses dUTP + H2O = dUMP + diphosphate + H(+). The viral dUTPase may play a role in lowering the dUTP concentration in natural infections to minimize misincorporation of deoxyuridine into the viral DNA and ensure the fidelity of genome replication. This Ornithodoros (relapsing fever ticks) protein is Deoxyuridine 5'-triphosphate nucleotidohydrolase.